Here is a 366-residue protein sequence, read N- to C-terminus: GTP cyclohydrolase 1 type 2 homolog (366 aa).

Residues H64, H65, D102, H326, and E329 each contribute to the a divalent metal cation site.

The protein belongs to the GTP cyclohydrolase I type 2/NIF3 family. In terms of assembly, homohexamer.

This Staphylococcus epidermidis (strain ATCC 12228 / FDA PCI 1200) protein is GTP cyclohydrolase 1 type 2 homolog.